Reading from the N-terminus, the 277-residue chain is Eukaryotic translation initiation factor 3 subunit J (277 aa).

Residues 1 to 80 (MSWDDEDFAV…PAATKNTMLD (80 aa)) are disordered. Positions 23 to 43 (WDDEFAENDDEPVLESWEDEE) are enriched in acidic residues. Residues 50-75 (KAAAAAAAKAPKKASPSPAATPAATK) show a composition bias toward low complexity. Residues 199-230 (TVENIRQTIATLNVLMKDKEREERQARLAKVK) adopt a coiled-coil conformation. The segment at 257-277 (DNDFDLGGNDNFDDFGEDDFM) is disordered. The span at 267-277 (NFDDFGEDDFM) shows a compositional bias: acidic residues.

This sequence belongs to the eIF-3 subunit J family. Component of the eukaryotic translation initiation factor 3 (eIF-3) complex.

It localises to the cytoplasm. Functionally, component of the eukaryotic translation initiation factor 3 (eIF-3) complex, which is involved in protein synthesis of a specialized repertoire of mRNAs and, together with other initiation factors, stimulates binding of mRNA and methionyl-tRNAi to the 40S ribosome. The eIF-3 complex specifically targets and initiates translation of a subset of mRNAs involved in cell proliferation. The polypeptide is Eukaryotic translation initiation factor 3 subunit J (Kluyveromyces lactis (strain ATCC 8585 / CBS 2359 / DSM 70799 / NBRC 1267 / NRRL Y-1140 / WM37) (Yeast)).